The chain runs to 279 residues: Acyl-coenzyme A thioesterase MBLAC2 (279 aa).

Position 2 is an N-acetylserine (Ser-2). His-83, His-85, Asp-87, His-88, His-170, Asp-189, and His-231 together coordinate Zn(2+). The S-palmitoyl cysteine moiety is linked to residue Cys-254.

This sequence belongs to the metallo-beta-lactamase superfamily. Glyoxalase II family. Zn(2+) serves as cofactor. In terms of processing, palmitoylated on Cys-254 by ZDHHC20.

The protein localises to the endoplasmic reticulum membrane. Its subcellular location is the cell membrane. The catalysed reaction is hexadecanoyl-CoA + H2O = hexadecanoate + CoA + H(+). It carries out the reaction dodecanoyl-CoA + H2O = dodecanoate + CoA + H(+). The enzyme catalyses tetradecanoyl-CoA + H2O = tetradecanoate + CoA + H(+). It catalyses the reaction octadecanoyl-CoA + H2O = octadecanoate + CoA + H(+). The catalysed reaction is a beta-lactam + H2O = a substituted beta-amino acid. Beta-lactamase activity is inhibited by sulbactam. Functionally, acyl-CoA thioesterases are a group of enzymes that catalyze the hydrolysis of acyl-CoAs to the free fatty acid and coenzyme A (CoASH), providing the potential to regulate intracellular levels of acyl-CoAs, free fatty acids and CoASH. Has an acyl-CoA thioesterase activity towards the long chain fatty acyl-CoA thioester palmitoyl-CoA (hexadecanoyl-CoA; C16:0-CoA). Displays a substrate preference for fatty acyl-CoAs with chain-lengths C12-C18. Possesses beta-lactamase activity, catalyzing the hydrolysis of penicillin G and nitrocefin. Exhibits no activity towards other beta-lactam antibiotic classes including cephalosporins (cefotaxime) and carbapenems (imipenem). The polypeptide is Acyl-coenzyme A thioesterase MBLAC2 (MBLAC2) (Homo sapiens (Human)).